Consider the following 86-residue polypeptide: Large ribosomal subunit protein bL31B (86 aa).

The protein belongs to the bacterial ribosomal protein bL31 family. Type B subfamily. Part of the 50S ribosomal subunit.

This Citrobacter koseri (strain ATCC BAA-895 / CDC 4225-83 / SGSC4696) protein is Large ribosomal subunit protein bL31B.